The chain runs to 380 residues: Queuine tRNA-ribosyltransferase (380 aa).

D96 acts as the Proton acceptor in catalysis. Substrate contacts are provided by residues 96–100 (DSGGF), D150, Q193, and G220. Residues 251–257 (GVGAPDS) form an RNA binding region. The active-site Nucleophile is the D270. The segment at 275-279 (TRIAR) is RNA binding; important for wobble base 34 recognition. Positions 308, 310, 313, and 339 each coordinate Zn(2+).

It belongs to the queuine tRNA-ribosyltransferase family. In terms of assembly, homodimer. Within each dimer, one monomer is responsible for RNA recognition and catalysis, while the other monomer binds to the replacement base PreQ1. The cofactor is Zn(2+).

It catalyses the reaction 7-aminomethyl-7-carbaguanine + guanosine(34) in tRNA = 7-aminomethyl-7-carbaguanosine(34) in tRNA + guanine. The protein operates within tRNA modification; tRNA-queuosine biosynthesis. Catalyzes the base-exchange of a guanine (G) residue with the queuine precursor 7-aminomethyl-7-deazaguanine (PreQ1) at position 34 (anticodon wobble position) in tRNAs with GU(N) anticodons (tRNA-Asp, -Asn, -His and -Tyr). Catalysis occurs through a double-displacement mechanism. The nucleophile active site attacks the C1' of nucleotide 34 to detach the guanine base from the RNA, forming a covalent enzyme-RNA intermediate. The proton acceptor active site deprotonates the incoming PreQ1, allowing a nucleophilic attack on the C1' of the ribose to form the product. After dissociation, two additional enzymatic reactions on the tRNA convert PreQ1 to queuine (Q), resulting in the hypermodified nucleoside queuosine (7-(((4,5-cis-dihydroxy-2-cyclopenten-1-yl)amino)methyl)-7-deazaguanosine). In Streptococcus equi subsp. zooepidemicus (strain H70), this protein is Queuine tRNA-ribosyltransferase.